The following is a 226-amino-acid chain: LexA repressor (226 aa).

The H-T-H motif DNA-binding region spans 42-62 (MREIGDAVGLASLSSVTHQLN). Catalysis depends on for autocatalytic cleavage activity residues Ser150 and Lys187.

Belongs to the peptidase S24 family. In terms of assembly, homodimer.

The catalysed reaction is Hydrolysis of Ala-|-Gly bond in repressor LexA.. Its function is as follows. Represses a number of genes involved in the response to DNA damage (SOS response), including recA and lexA. In the presence of single-stranded DNA, RecA interacts with LexA causing an autocatalytic cleavage which disrupts the DNA-binding part of LexA, leading to derepression of the SOS regulon and eventually DNA repair. The sequence is that of LexA repressor from Clavibacter sepedonicus (Clavibacter michiganensis subsp. sepedonicus).